Here is a 327-residue protein sequence, read N- to C-terminus: MREIKLNPDSLEIYEKSDSGKLNRNDLIDLWNLDLNDLLNISCALKKLFNKDKIDLCSIMNAKSGICPENCIFCSQSKHNTSKIDTYELKSKEEILKNAKSVEKYSNRFSIVVSGKTVTDLEFEKIIESIEEIQNKTKLKVCVSLGLLNKDKLKALKEKNVRIHNNLETSENYFKNICTSHDYNDKVKVILEAKKIGLEMCSGGIFGMGESIEDRVDLFLDLKKLGVDSVALNLLNPIYGTKIYEKIKFGVISPINSIDALKSICIARIALPDKVIRLCGGREHVLKDMQKYSLFALDGLMIGNYLTTNGQNIQSDLKMIKEMGFER.

Residues 49-273 (FNKDKIDLCS…ICIARIALPD (225 aa)) enclose the Radical SAM core domain. [4Fe-4S] cluster-binding residues include C67, C71, and C74. S110, C142, C201, and R277 together coordinate [2Fe-2S] cluster.

It belongs to the radical SAM superfamily. Biotin synthase family. In terms of assembly, homodimer. [4Fe-4S] cluster is required as a cofactor. [2Fe-2S] cluster serves as cofactor.

The catalysed reaction is (4R,5S)-dethiobiotin + (sulfur carrier)-SH + 2 reduced [2Fe-2S]-[ferredoxin] + 2 S-adenosyl-L-methionine = (sulfur carrier)-H + biotin + 2 5'-deoxyadenosine + 2 L-methionine + 2 oxidized [2Fe-2S]-[ferredoxin]. It participates in cofactor biosynthesis; biotin biosynthesis; biotin from 7,8-diaminononanoate: step 2/2. Functionally, catalyzes the conversion of dethiobiotin (DTB) to biotin by the insertion of a sulfur atom into dethiobiotin via a radical-based mechanism. This chain is Biotin synthase, found in Methanococcus maripaludis (strain C6 / ATCC BAA-1332).